We begin with the raw amino-acid sequence, 206 residues long: Small ribosomal subunit protein uS4 (206 aa).

The 61-residue stretch at 96–156 folds into the S4 RNA-binding domain; that stretch reads SRLDNIVYRL…KKSKNQLRIK (61 aa).

This sequence belongs to the universal ribosomal protein uS4 family. Part of the 30S ribosomal subunit. Contacts protein S5. The interaction surface between S4 and S5 is involved in control of translational fidelity.

Functionally, one of the primary rRNA binding proteins, it binds directly to 16S rRNA where it nucleates assembly of the body of the 30S subunit. In terms of biological role, with S5 and S12 plays an important role in translational accuracy. This chain is Small ribosomal subunit protein uS4, found in Buchnera aphidicola subsp. Cinara cedri (strain Cc).